The sequence spans 382 residues: tRNA-specific 2-thiouridylase MnmA (382 aa).

ATP contacts are provided by residues 18 to 25 and L44; that span reads AMSGGVDS. The active-site Nucleophile is the C112. Residues C112 and C209 are joined by a disulfide bond. G136 serves as a coordination point for ATP. Positions 159 to 161 are interaction with tRNA; the sequence is RDQ. C209 acts as the Cysteine persulfide intermediate in catalysis.

It belongs to the MnmA/TRMU family.

It localises to the cytoplasm. It carries out the reaction S-sulfanyl-L-cysteinyl-[protein] + uridine(34) in tRNA + AH2 + ATP = 2-thiouridine(34) in tRNA + L-cysteinyl-[protein] + A + AMP + diphosphate + H(+). Functionally, catalyzes the 2-thiolation of uridine at the wobble position (U34) of tRNA, leading to the formation of s(2)U34. This is tRNA-specific 2-thiouridylase MnmA from Methylobacterium nodulans (strain LMG 21967 / CNCM I-2342 / ORS 2060).